Consider the following 217-residue polypeptide: MATIDVVNLSGEKVGSFELADEVFGAVNEDLLWEAVKHYRAGQHRGTHATKNKKLVSGAGKKLWKQKGTGRARVGSIRSPLWRHGGTVHGPQPRSYDYAFPRKKLLGALRSALAAKLADGKLTVVESFDVKEPKANAFRKTLAGLKVDKTALLIESAENKNLELSSRNLKGVELVAGNAVHPYHLLRYDRAVIARPALEKLQNSLKKAASKRHAEVA.

This sequence belongs to the universal ribosomal protein uL4 family. In terms of assembly, part of the 50S ribosomal subunit.

One of the primary rRNA binding proteins, this protein initially binds near the 5'-end of the 23S rRNA. It is important during the early stages of 50S assembly. It makes multiple contacts with different domains of the 23S rRNA in the assembled 50S subunit and ribosome. In terms of biological role, forms part of the polypeptide exit tunnel. The sequence is that of Large ribosomal subunit protein uL4 from Koribacter versatilis (strain Ellin345).